We begin with the raw amino-acid sequence, 629 residues long: Glycerol-3-phosphate dehydrogenase SDP6, mitochondrial (629 aa).

A mitochondrion-targeting transit peptide spans 1–48 (MSLASIRRLAAGAAVIAAASGGAVYLSPSVASSDKGGGPILDSLRRRL). FAD is bound at residue 75–103 (DVLVIGGGATGSGVALDAVTRGLRVGLVE).

This sequence belongs to the FAD-dependent glycerol-3-phosphate dehydrogenase family. Requires FAD as cofactor. In terms of tissue distribution, expressed in germinating seedlings. Also detected in roots, leaves, flowers, developing siliques and germinating seeds.

Its subcellular location is the mitochondrion inner membrane. It carries out the reaction a quinone + sn-glycerol 3-phosphate = dihydroxyacetone phosphate + a quinol. The protein operates within polyol metabolism; glycerol degradation via glycerol kinase pathway; glycerone phosphate from sn-glycerol 3-phosphate (anaerobic route): step 1/1. In terms of biological role, required for glycerol catabolism and involved in NADH/NAD(+) homeostasis. Essential for postgerminative growth and seedling establishment. The polypeptide is Glycerol-3-phosphate dehydrogenase SDP6, mitochondrial (Arabidopsis thaliana (Mouse-ear cress)).